The chain runs to 1028 residues: Exportin-T (1028 aa).

It belongs to the exportin family.

The protein resides in the nucleus. Its subcellular location is the cytoplasm. Its function is as follows. tRNA nucleus export receptor which facilitates tRNA translocation across the nuclear pore complex. Involved in pre-tRNA splicing, probably by affecting the interaction of pre-tRNA with splicing endonuclease. This chain is Exportin-T (los1), found in Aspergillus terreus (strain NIH 2624 / FGSC A1156).